Consider the following 142-residue polypeptide: Hemoglobin subunit alpha (142 aa).

Residues 1–142 form the Globin domain; it reads VLSAADKNNV…VSTVLTSKYR (142 aa). S3 bears the Phosphoserine mark. An N6-succinyllysine mark is found at K7 and K11. An N6-acetyllysine; alternate modification is found at K16. An N6-succinyllysine; alternate modification is found at K16. The residue at position 24 (Y24) is a Phosphotyrosine. The residue at position 35 (S35) is a Phosphoserine. The residue at position 40 (K40) is an N6-succinyllysine. Position 58 (H58) interacts with O2. A heme b-binding site is contributed by H87. S102 bears the Phosphoserine mark. T108 bears the Phosphothreonine mark. S125 is modified (phosphoserine). 2 positions are modified to phosphothreonine: T135 and T138. A Phosphoserine modification is found at S139.

This sequence belongs to the globin family. As to quaternary structure, heterotetramer of two alpha chains and two beta chains. In terms of tissue distribution, red blood cells.

Functionally, involved in oxygen transport from the lung to the various peripheral tissues. Its function is as follows. Hemopressin acts as an antagonist peptide of the cannabinoid receptor CNR1. Hemopressin-binding efficiently blocks cannabinoid receptor CNR1 and subsequent signaling. The protein is Hemoglobin subunit alpha (HBA) of Procavia capensis habessinica (Abyssinian hyrax).